A 320-amino-acid polypeptide reads, in one-letter code: Cytochrome f (320 aa).

An N-terminal signal peptide occupies residues 1–35 (MQTRNTFSWIKEQITRSISASLMIYIITRTSISNA). Tyrosine 36, cysteine 56, cysteine 59, and histidine 60 together coordinate heme. Residues 286–306 (VQGLLFFFAAVILAQIFLVLK) form a helical membrane-spanning segment.

The protein belongs to the cytochrome f family. The 4 large subunits of the cytochrome b6-f complex are cytochrome b6, subunit IV (17 kDa polypeptide, petD), cytochrome f and the Rieske protein, while the 4 small subunits are PetG, PetL, PetM and PetN. The complex functions as a dimer. Heme is required as a cofactor.

It is found in the plastid. The protein resides in the chloroplast thylakoid membrane. Component of the cytochrome b6-f complex, which mediates electron transfer between photosystem II (PSII) and photosystem I (PSI), cyclic electron flow around PSI, and state transitions. This is Cytochrome f from Helianthus annuus (Common sunflower).